Consider the following 172-residue polypeptide: Adenine phosphoribosyltransferase (172 aa).

This sequence belongs to the purine/pyrimidine phosphoribosyltransferase family. As to quaternary structure, homodimer.

The protein resides in the cytoplasm. It catalyses the reaction AMP + diphosphate = 5-phospho-alpha-D-ribose 1-diphosphate + adenine. The protein operates within purine metabolism; AMP biosynthesis via salvage pathway; AMP from adenine: step 1/1. Functionally, catalyzes a salvage reaction resulting in the formation of AMP, that is energically less costly than de novo synthesis. The sequence is that of Adenine phosphoribosyltransferase from Gloeothece citriformis (strain PCC 7424) (Cyanothece sp. (strain PCC 7424)).